Consider the following 349-residue polypeptide: Phosphoribosylformylglycinamidine cyclo-ligase (349 aa).

The protein belongs to the AIR synthase family.

The protein resides in the cytoplasm. It catalyses the reaction 2-formamido-N(1)-(5-O-phospho-beta-D-ribosyl)acetamidine + ATP = 5-amino-1-(5-phospho-beta-D-ribosyl)imidazole + ADP + phosphate + H(+). It functions in the pathway purine metabolism; IMP biosynthesis via de novo pathway; 5-amino-1-(5-phospho-D-ribosyl)imidazole from N(2)-formyl-N(1)-(5-phospho-D-ribosyl)glycinamide: step 2/2. This is Phosphoribosylformylglycinamidine cyclo-ligase from Bordetella avium (strain 197N).